Reading from the N-terminus, the 1807-residue chain is Nucleoporin nup189 (1807 aa).

Residues 1–118 (MFGQNNSSGF…SGGGLFGSNT (118 aa)) are disordered. 2 GLFG repeats span residues 26-29 (GLFG) and 66-69 (GLFG). Residues 29–61 (GSNSNTPGNTLFGSQNTSTTGFGQNTTQPLFGS) are compositionally biased toward polar residues. The segment covering 62–77 (NTNGGLFGNRNNTTTT) has biased composition (low complexity). The segment covering 78-90 (GGTGFGMSSGTGM) has biased composition (gly residues). Residues 93–108 (QSNTPAFGGTNNATNP) are compositionally biased toward polar residues. GLFG repeat units lie at residues 112–115 (GLFG), 152–155 (GLFG), 177–180 (GLFG), 308–311 (GLFG), 335–338 (GLFG), 350–353 (GLFG), 381–384 (GLFG), 399–402 (GLFG), 435–438 (GLFG), and 521–524 (GLFG). A compositionally biased stretch (polar residues) spans 565 to 584 (PGTGLFGSTQTNNATSNTGT). The segment at 565–685 (PGTGLFGSTQ…SSTTSQVAPT (121 aa)) is disordered. GLFG repeat units lie at residues 585–588 (GLFG), 611–614 (GLFG), 627–630 (GLFG), and 646–649 (GLFG). The segment covering 588–600 (GSNNANTTNTGGS) has biased composition (low complexity). Polar residues predominate over residues 603–644 (NKPSTTTGGLFGNTTAQQPSTTTSGLFGASNTNNQAQTSNFG). Low complexity predominate over residues 653 to 663 (AGQQQQPLQAS). A compositionally biased stretch (polar residues) spans 664-685 (IDQNPYGNNPLFSSTTSQVAPT). Ser724 carries the phosphoserine modification. Positions 785-814 (QNGVKNGNDAKSDSKVQEKAPQNEADGSLK) are disordered. Basic and acidic residues predominate over residues 792–802 (NDAKSDSKVQE). The 142-residue stretch at 822–963 (SDDYWMKPSI…GKWIFKVQHF (142 aa)) folds into the Peptidase S59 domain. Residues 974–1020 (EENDMSSTSNEAGNLKKYDQPNLKVSGKNDSFVTHHTPGAFPNDSKN) form a disordered region. The residue at position 1051 (Ser1051) is a Phosphoserine. The disordered stretch occupies residues 1082–1104 (KENNVPLSEDDLSNSSESSNESV). The segment covering 1094–1104 (SNSSESSNESV) has biased composition (low complexity).

This sequence belongs to the nucleoporin GLFG family. As to quaternary structure, interacts (via G-L-F-G repeats) with rpn15/dss1. Interacts with raf1. Interacts with ned1. Post-translationally, nup189 is autocatalytically cleaved in nup98 and nup96.

The protein localises to the nucleus. The protein resides in the nuclear pore complex. Functions as a component of the nuclear pore complex (NPC). NPC components, collectively referred to as nucleoporins (NUPs), can play the role of both NPC structural components and of docking or interaction partners for transiently associated nuclear transport factors. Active directional transport is assured by both, a Phe-Gly (FG) repeat affinity gradient for these transport factors across the NPC and a transport cofactor concentration gradient across the nuclear envelope. Nup189 is autocatalytically cleaved in vivo in 2 polypeptides which assume different functions in the NPC. Nup98 as one of the FG repeat nucleoporins participates in karyopherin interactions and contains part of the autocatalytic cleavage activity. Nup96 as part of the NUP84 complex is involved in nuclear poly(A)+ RNA and tRNA export. In Schizosaccharomyces pombe (strain 972 / ATCC 24843) (Fission yeast), this protein is Nucleoporin nup189 (nup189).